The chain runs to 419 residues: Gamma-glutamyl phosphate reductase (419 aa).

Belongs to the gamma-glutamyl phosphate reductase family.

It localises to the cytoplasm. It catalyses the reaction L-glutamate 5-semialdehyde + phosphate + NADP(+) = L-glutamyl 5-phosphate + NADPH + H(+). It functions in the pathway amino-acid biosynthesis; L-proline biosynthesis; L-glutamate 5-semialdehyde from L-glutamate: step 2/2. Its function is as follows. Catalyzes the NADPH-dependent reduction of L-glutamate 5-phosphate into L-glutamate 5-semialdehyde and phosphate. The product spontaneously undergoes cyclization to form 1-pyrroline-5-carboxylate. The chain is Gamma-glutamyl phosphate reductase from Caulobacter sp. (strain K31).